We begin with the raw amino-acid sequence, 256 residues long: MLEFYGKRFESRLLLGTAQYPSPSILADAVRASLSRIVTVSLRRESGEARAGQDFWALIKALGVAVLPNTAGCHTPREAITTAHMAREVFGTNWIKLEVIGDTDTLQPDPFGLVEAARILCDEGFEVFPYMNDDLIVAERLIEAGCKVLMPWGAPIGSGRGFNNPYALKTMRAHFPDIPLVVDAGIGVPSHAAAAMELGFDAVLINTAVAKAGDPAAMARAFALAVEAGRLAYEADPIEARDMASPSTPLLGKAFL.

Lysine 96 (schiff-base intermediate with DXP) is an active-site residue. Residues glycine 157, 184-185, and 206-207 contribute to the 1-deoxy-D-xylulose 5-phosphate site; these read AG and NT.

Belongs to the ThiG family. As to quaternary structure, homotetramer. Forms heterodimers with either ThiH or ThiS.

The protein localises to the cytoplasm. It catalyses the reaction [ThiS sulfur-carrier protein]-C-terminal-Gly-aminoethanethioate + 2-iminoacetate + 1-deoxy-D-xylulose 5-phosphate = [ThiS sulfur-carrier protein]-C-terminal Gly-Gly + 2-[(2R,5Z)-2-carboxy-4-methylthiazol-5(2H)-ylidene]ethyl phosphate + 2 H2O + H(+). The protein operates within cofactor biosynthesis; thiamine diphosphate biosynthesis. Catalyzes the rearrangement of 1-deoxy-D-xylulose 5-phosphate (DXP) to produce the thiazole phosphate moiety of thiamine. Sulfur is provided by the thiocarboxylate moiety of the carrier protein ThiS. In vitro, sulfur can be provided by H(2)S. This chain is Thiazole synthase, found in Brucella melitensis biotype 2 (strain ATCC 23457).